A 170-amino-acid polypeptide reads, in one-letter code: Protein SprT (170 aa).

One can recognise a SprT-like domain in the interval 19 to 163; sequence REKLQQANLR…RCLHCGTSLR (145 aa). His-78 provides a ligand contact to Zn(2+). Residue Glu-79 is part of the active site. His-82 serves as a coordination point for Zn(2+).

This sequence belongs to the SprT family. It depends on Zn(2+) as a cofactor.

It is found in the cytoplasm. This Erwinia tasmaniensis (strain DSM 17950 / CFBP 7177 / CIP 109463 / NCPPB 4357 / Et1/99) protein is Protein SprT.